The primary structure comprises 324 residues: Glyoxylate/hydroxypyruvate reductase B (324 aa).

Active-site residues include R237 and E266. The active-site Proton donor is the H285.

This sequence belongs to the D-isomer specific 2-hydroxyacid dehydrogenase family. GhrB subfamily. In terms of assembly, homodimer.

It localises to the cytoplasm. It catalyses the reaction glycolate + NADP(+) = glyoxylate + NADPH + H(+). The catalysed reaction is (R)-glycerate + NAD(+) = 3-hydroxypyruvate + NADH + H(+). It carries out the reaction (R)-glycerate + NADP(+) = 3-hydroxypyruvate + NADPH + H(+). Its function is as follows. Catalyzes the NADPH-dependent reduction of glyoxylate and hydroxypyruvate into glycolate and glycerate, respectively. In Salmonella dublin (strain CT_02021853), this protein is Glyoxylate/hydroxypyruvate reductase B.